The sequence spans 1458 residues: Phospholipase B1, membrane-associated (1458 aa).

The first 21 residues, 1–21 (MGLRPGIFLLELLLLLGQGTP), serve as a signal peptide directing secretion. Topologically, residues 22-1417 (QIHTSPRKST…QAEEAPEVLY (1396 aa)) are extracellular. 3 consecutive repeat copies span residues 39-347 (ETLK…YRNS), 362-707 (VREG…YKNS), and 708-1054 (MQGH…PRNS). Residues 39 to 1402 (ETLKNSPFPC…SPYLYTLRNS (1364 aa)) form a 4 X 308-326 AA approximate repeats region. 2 N-linked (GlcNAc...) asparagine glycosylation sites follow: Asn-173 and Asn-240. Ser-400 is a catalytic residue. The N-linked (GlcNAc...) asparagine glycan is linked to Asn-493. Asp-514 is a catalytic residue. Residues Asn-529 and Asn-590 are each glycosylated (N-linked (GlcNAc...) asparagine). Residue His-655 is part of the active site. Residues Asn-690, Asn-783, Asn-797, Asn-809, Asn-1055, Asn-1113, Asn-1275, and Asn-1378 are each glycosylated (N-linked (GlcNAc...) asparagine). The stretch at 1064-1402 (IENWGSDFLC…SPYLYTLRNS (339 aa)) is repeat 4. The necessary for membrane localization stretch occupies residues 1403–1445 (RLLPDQAEEAPEVLYWAVPVAAGVGLVVGIIGTVVWRCRRGGR). A helical membrane pass occupies residues 1418–1438 (WAVPVAAGVGLVVGIIGTVVW). Over 1439–1458 (RCRRGGRREDPPMSLRTVAL) the chain is Cytoplasmic.

Belongs to the 'GDSL' lipolytic enzyme family. Phospholipase B1 subfamily. In terms of processing, undergoes proteolytic cleavage in the ileum. In terms of tissue distribution, expressed in the epidermis (at protein level).

The protein resides in the apical cell membrane. The catalysed reaction is a 1,2-diacyl-sn-glycero-3-phosphocholine + H2O = a 1-acyl-sn-glycero-3-phosphocholine + a fatty acid + H(+). The enzyme catalyses a 1-O-alkyl-2-acyl-sn-glycero-3-phosphocholine + H2O = a 1-O-alkyl-sn-glycero-3-phosphocholine + a fatty acid + H(+). It carries out the reaction a 1-acyl-sn-glycero-3-phosphocholine + H2O = sn-glycerol 3-phosphocholine + a fatty acid + H(+). It catalyses the reaction a triacylglycerol + H2O = a diacylglycerol + a fatty acid + H(+). The catalysed reaction is 1,2-dihexadecanoyl-sn-glycero-3-phosphocholine + H2O = 1-hexadecanoyl-sn-glycero-3-phosphocholine + hexadecanoate + H(+). The enzyme catalyses 1-hexadecanoyl-2-(9Z-octadecenoyl)-sn-glycero-3-phosphocholine + H2O = 1-hexadecanoyl-sn-glycero-3-phosphocholine + (9Z)-octadecenoate + H(+). It carries out the reaction 1,2-di-(9Z-octadecenoyl)-sn-glycero-3-phosphocholine + H2O = 1-(9Z-octadecenoyl)-sn-glycero-3-phosphocholine + (9Z)-octadecenoate + H(+). It catalyses the reaction 1-hexadecanoyl-2-(9Z,12Z-octadecadienoyl)-sn-glycero-3-phosphocholine + H2O = (9Z,12Z)-octadecadienoate + 1-hexadecanoyl-sn-glycero-3-phosphocholine + H(+). The catalysed reaction is 1-hexadecanoyl-2-(9Z,12Z-octadecadienoyl)-sn-glycero-3-phosphocholine + H2O = 2-(9Z,12Z-octadecadienoyl)-sn-glycero-3-phosphocholine + hexadecanoate + H(+). The enzyme catalyses 1-hexadecanoyl-2-(9Z-octadecenoyl)-sn-glycero-3-phosphoethanolamine + H2O = 1-hexadecanoyl-sn-glycero-3-phosphoethanolamine + (9Z)-octadecenoate + H(+). It carries out the reaction 1-hexadecanoyl-2-(9Z-octadecenoyl)-sn-glycero-3-phospho-(1'-sn-glycerol) + H2O = 1-hexadecanoyl-sn-glycero-3-phospho-(1'-sn-glycerol) + (9Z)-octadecenoate + H(+). It catalyses the reaction 1,2-dihexadecanoyl-sn-glycero-3-phosphocholine + 2 H2O = sn-glycerol 3-phosphocholine + 2 hexadecanoate + 2 H(+). The catalysed reaction is 1-O-hexadecyl-2-(9Z)-octadecenoyl-sn-glycero-3-phosphocholine + H2O = 1-O-hexadecyl-sn-glycero-3-phosphocholine + (9Z)-octadecenoate + H(+). The enzyme catalyses 1-hexadecanoyl-sn-glycero-3-phosphocholine + H2O = sn-glycerol 3-phosphocholine + hexadecanoate + H(+). It carries out the reaction 1,2,3-tri-(9Z-octadecenoyl)-glycerol + H2O = di-(9Z)-octadecenoylglycerol + (9Z)-octadecenoate + H(+). It catalyses the reaction 1-hexadecanoyl-2-(9Z)-octadecenoyl-3-octadecanoyl-sn-glycerol + H2O = 1-hexadecanoyl-2-(9Z-octadecenoyl)-sn-glycerol + octadecanoate + H(+). The catalysed reaction is 1,3-dihexadecanoyl-2-(9Z-octadecenoyl)glycerol + H2O = 1,3-dihexadecanoylglycerol + (9Z)-octadecenoate + H(+). The enzyme catalyses 1,3-dihexadecanoyl-2-(9Z-octadecenoyl)glycerol + H2O = 1-hexadecanoyl-2-(9Z-octadecenoyl)-glycerol + hexadecanoate + H(+). It carries out the reaction 1-hexadecanoyl-2-(9Z)-octadecenoyl-3-octadecanoyl-sn-glycerol + H2O = 1-hexadecanoyl-3-octadecanoyl-sn-glycerol + (9Z)-octadecenoate + H(+). It catalyses the reaction 1-hexadecanoyl-2-(9Z)-octadecenoyl-3-octadecanoyl-sn-glycerol + H2O = 2-(9Z-octadecenoyl)-3-octadecanoyl-sn-glycerol + hexadecanoate + H(+). The catalysed reaction is 1-octadecanoyl-2-(9Z,12Z)-octadecadienoyl-sn-glycerol + H2O = 1-octadecanoyl-sn-glycerol + (9Z,12Z)-octadecadienoate + H(+). The enzyme catalyses 1,2-di-(9Z-octadecenoyl)-sn-glycerol + H2O = 1-(9Z-octadecenoyl)-sn-glycerol + (9Z)-octadecenoate + H(+). It carries out the reaction 2,3-di-(9Z)-octadecenoyl-sn-glycerol + H2O = 3-(9Z-octadecenoyl)-sn-glycerol + (9Z)-octadecenoate + H(+). It catalyses the reaction 1,3-di-(9Z-octadecenoyl)-glycerol + H2O = 1-(9Z-octadecenoyl)-glycerol + (9Z)-octadecenoate + H(+). The catalysed reaction is 1-(9Z-octadecenoyl)-glycerol + H2O = glycerol + (9Z)-octadecenoate + H(+). The enzyme catalyses 2-(9Z-octadecenoyl)-glycerol + H2O = glycerol + (9Z)-octadecenoate + H(+). Functionally, calcium-independent membrane-associated phospholipase that catalyzes complete diacylation of phospholipids by hydrolyzing both sn-1 and sn-2 fatty acyl chains attached to the glycerol backbone (phospholipase B activity). Has dual phospholipase and lysophospholipase activities toward diacylphospholipids. Preferentially cleaves sn-2 ester bonds over sn-1 bonds. Acts as a lipase toward glycerolipid substrates. Hydrolyzes fatty acyl chains of diacylglycerols with preference for the sn-2 position and of triacylglycerols with not positional selectivity. May also hydrolyze long chain retinyl esters such as retinyl palmitate. May contribute to digestion of dietary phospholipids, glycerolipids and retinoids, facilitating lipid absorption at the brush border. This chain is Phospholipase B1, membrane-associated (PLB1), found in Homo sapiens (Human).